We begin with the raw amino-acid sequence, 324 residues long: 4-hydroxybenzoyl-CoA reductase subunit beta (324 aa).

An FAD-binding PCMH-type domain is found at 2–217 (NILTDFRTHR…AAIEVPPTGA (216 aa)). Residues 29 to 36 (PLGAGTDL), T111, N115, and Q118 each bind FAD. [4Fe-4S] cluster-binding residues include C122, C138, C146, and C155. Residues D162 and K224 each coordinate FAD.

In terms of assembly, heterohexamer of two alpha, two beta and two gamma subunits. Requires FAD as cofactor. [4Fe-4S] cluster serves as cofactor.

The enzyme catalyses oxidized 2[4Fe-4S]-[ferredoxin] + benzoyl-CoA + H2O = 4-hydroxybenzoyl-CoA + reduced 2[4Fe-4S]-[ferredoxin] + 2 H(+). Its activity is regulated as follows. Inactivated by low concentrations of cyanide in vitro. Its function is as follows. Component of a complex that catalyzes the reductive dehydroxylation of 4-hydroxybenzoyl-CoA to benzoyl-CoA. Reaction is not reversible. Is a key enzyme in the anaerobic degradation of phenolic compounds. This chain is 4-hydroxybenzoyl-CoA reductase subunit beta (hcrB), found in Thauera aromatica.